Consider the following 530-residue polypeptide: GMP synthase [glutamine-hydrolyzing] (530 aa).

The Glutamine amidotransferase type-1 domain maps to 18–207 (TILVLDFGSQ…AVDICQAKTN (190 aa)). Residue Cys-94 is the Nucleophile of the active site. Active-site residues include His-181 and Glu-183. The GMPS ATP-PPase domain occupies 208–405 (WSMENFIDTE…LGVPEDLVWR (198 aa)). 236 to 242 (SGGVDST) lines the ATP pocket. Residues Arg-309, Asp-467, Lys-522, and Glu-528 each coordinate XMP.

Homodimer. Mg(2+) is required as a cofactor.

It is found in the cytoplasm. The protein resides in the cytosol. The catalysed reaction is XMP + L-glutamine + ATP + H2O = GMP + L-glutamate + AMP + diphosphate + 2 H(+). It functions in the pathway purine metabolism; GMP biosynthesis; GMP from XMP (L-Gln route): step 1/1. Its function is as follows. Catalyzes the conversion of xanthine monophosphate (XMP) to GMP in the presence of glutamine and ATP through an adenyl-XMP intermediate. The sequence is that of GMP synthase [glutamine-hydrolyzing] (GUA1) from Candida albicans (strain SC5314 / ATCC MYA-2876) (Yeast).